Here is a 514-residue protein sequence, read N- to C-terminus: Voltage-gated potassium channel regulatory subunit KCNG1 (514 aa).

Topologically, residues 1-224 (MTLLPGDNSD…DMVEKPHSGL (224 aa)) are cytoplasmic. Residues 181–196 (EREDEEEALDSEDQES) show a composition bias toward acidic residues. Residues 181–205 (EREDEEEALDSEDQESEGPSTSEGR) form a disordered region. A helical transmembrane segment spans residues 225–246 (PGKVFACLSVLFVTVTAVNLSV). Residues 247–267 (STLPSLREEEEQGQCSQMCHN) lie on the Extracellular side of the membrane. Residues 268-289 (VFIVESVCVGWFSLEFLLRFIQ) form a helical membrane-spanning segment. Over 290-300 (APSKFAFLRSP) the chain is Cytoplasmic. A helical transmembrane segment spans residues 301–321 (LTLIDLVAILPYYVTLLVDGA). Over 322 to 338 (ASSRRKPSTGNSYLDKV) the chain is Extracellular. A helical; Voltage-sensor transmembrane segment spans residues 339-359 (GLVLRVLRALRILYVMRLARH). Residues 360 to 374 (SLGLQTLGLTARRCT) are Cytoplasmic-facing. Residues 375-396 (REFGLLLLFLCVAIALFAPLLY) traverse the membrane as a helical segment. The Extracellular segment spans residues 397 to 411 (VIENEMADSPEFTSI). Positions 412–423 (PACYWWAVITMT) form an intramembrane region, helical. The Selectivity filter motif lies at 424–429 (TVGYGD). An intramembrane segment occupies 424 to 431 (TVGYGDMV). The Extracellular segment spans residues 432–438 (PRSTPGQ). Residues 439-467 (VVALSSILSGILLMAFPVTSIFHTFSRSY) traverse the membrane as a helical segment. At 468-514 (LELKQEQERVLIRRAQYLIKTKSQLSGMSQDSDILFGSASSDTRDNN) the chain is on the cytoplasmic side.

The protein belongs to the potassium channel family. G (TC 1.A.1.2) subfamily. Kv6.1/KCNG1 sub-subfamily. Heterotetramer with KCNB1 or KCNB2.

Its subcellular location is the cell membrane. In terms of biological role, regulatory alpha-subunit of the voltage-gated potassium (Kv) channel which, when coassembled with KCNB1 or KCNB2, can modulate their expression and their gating kinetics by acting on deactivation upon repolarization and inactivation during maintained depolarization. Potassium channel subunit that does not form functional channels by itself. The sequence is that of Voltage-gated potassium channel regulatory subunit KCNG1 from Rattus norvegicus (Rat).